A 916-amino-acid polypeptide reads, in one-letter code: Major intrinsically disordered Notch2-binding receptor 1 (916 aa).

The Cytoplasmic portion of the chain corresponds to 1–891 (METSQETSLF…AEFRRAKVCK (891 aa)). Disordered regions lie at residues 390 to 409 (EEKLHYPNASSQTPNFPAPE), 553 to 591 (KSDCDSSPEHNLTKIANGVPNSKGDKGNRPENTHHSEEE), 648 to 675 (SLTSEGPSDDSASPRMFHAHSGSHGPKL), 705 to 726 (TRPSSRSLTEENSATESKIASI), and 745 to 782 (NEEEIKDTGPGDNKDWHRKSKEADRQYDIPPQHRLPKQ). Composition is skewed to basic and acidic residues over residues 553 to 564 (KSDCDSSPEHNL) and 575 to 591 (KGDKGNRPENTHHSEEE). Position 711 is a phosphoserine (S711). Residues 750-771 (KDTGPGDNKDWHRKSKEADRQY) are compositionally biased toward basic and acidic residues. The helical transmembrane segment at 892-912 (IAALIAAAACTVILVIVVPIC) threads the bilayer. The Extracellular segment spans residues 913-916 (TMKS).

It belongs to the MINAR family. Interacts with NOTCH2; this interaction increases MINAR1 stability. Interacts (via N-terminus) with DEPTOR (via PDZ domain); this interaction may stabilize DEPTOR protein by impairing its ubiquitination. Widely expressed, including in breast epithelial cells and endothelial cells (at protein level). Expression is down-regulated in advanced breast tumors (at protein level).

The protein localises to the cell membrane. Its function is as follows. Intrinsically disordered protein which may negatively regulate mTOR signaling pathway by stabilizing the mTOR complex component DEPTOR. Negatively regulates angiogenesis. Negatively regulates cell growth. Negatively regulates neurite outgrowth in hippocampal neurons. The chain is Major intrinsically disordered Notch2-binding receptor 1 from Homo sapiens (Human).